A 23-amino-acid polypeptide reads, in one-letter code: Caerin-4.1 (23 aa).

In terms of tissue distribution, expressed by the skin parotoid and/or rostral glands.

The protein localises to the secreted. Its function is as follows. Antibacterial peptide, that adopts an alpha helical conformation which can disrupt bacterial membranes. Each caerin displays a different antimicrobial specificity. The polypeptide is Caerin-4.1 (Ranoidea caerulea (Green tree frog)).